A 1068-amino-acid chain; its full sequence is Carbamoyl phosphate synthase large chain (1068 aa).

The tract at residues 1–401 (MPLNKDIKKV…AFLKGTRSLE (401 aa)) is carboxyphosphate synthetic domain. Residues R129, R169, G175, G176, K208, V210, E215, G241, I242, H243, Q284, and E298 each contribute to the ATP site. Positions 133–327 (RNVMSRINGP…IAKVASKIAL (195 aa)) constitute an ATP-grasp 1 domain. Mg(2+)-binding residues include Q284, E298, and N300. The Mn(2+) site is built by Q284, E298, and N300. Positions 402 to 549 (IGKYSLEHKK…YSTYDVYDEV (148 aa)) are oligomerization domain. A carbamoyl phosphate synthetic domain region spans residues 550–932 (EVSKNKKVIV…ALYKGFIGAN (383 aa)). In terms of domain architecture, ATP-grasp 2 spans 674–864 (DELLEKLKIA…IVDIATRVML (191 aa)). ATP-binding residues include R710, K749, L751, E755, G780, V781, H782, S783, Q823, and E835. The Mg(2+) site is built by Q823, E835, and N837. Mn(2+)-binding residues include Q823, E835, and N837. Positions 933–1068 (MSIKKEKGTV…ETLYIFDLSN (136 aa)) constitute an MGS-like domain. The allosteric domain stretch occupies residues 933-1068 (MSIKKEKGTV…ETLYIFDLSN (136 aa)).

The protein belongs to the CarB family. In terms of assembly, composed of two chains; the small (or glutamine) chain promotes the hydrolysis of glutamine to ammonia, which is used by the large (or ammonia) chain to synthesize carbamoyl phosphate. Tetramer of heterodimers (alpha,beta)4. Mg(2+) serves as cofactor. The cofactor is Mn(2+).

It carries out the reaction hydrogencarbonate + L-glutamine + 2 ATP + H2O = carbamoyl phosphate + L-glutamate + 2 ADP + phosphate + 2 H(+). It catalyses the reaction hydrogencarbonate + NH4(+) + 2 ATP = carbamoyl phosphate + 2 ADP + phosphate + 2 H(+). The protein operates within amino-acid biosynthesis; L-arginine biosynthesis; carbamoyl phosphate from bicarbonate: step 1/1. Its pathway is pyrimidine metabolism; UMP biosynthesis via de novo pathway; (S)-dihydroorotate from bicarbonate: step 1/3. Functionally, large subunit of the glutamine-dependent carbamoyl phosphate synthetase (CPSase). CPSase catalyzes the formation of carbamoyl phosphate from the ammonia moiety of glutamine, carbonate, and phosphate donated by ATP, constituting the first step of 2 biosynthetic pathways, one leading to arginine and/or urea and the other to pyrimidine nucleotides. The large subunit (synthetase) binds the substrates ammonia (free or transferred from glutamine from the small subunit), hydrogencarbonate and ATP and carries out an ATP-coupled ligase reaction, activating hydrogencarbonate by forming carboxy phosphate which reacts with ammonia to form carbamoyl phosphate. This Clostridium botulinum (strain Kyoto / Type A2) protein is Carbamoyl phosphate synthase large chain.